A 1065-amino-acid chain; its full sequence is Isoleucine--tRNA ligase (1065 aa).

The short motif at P49–T59 is the 'HIGH' region element. A 'KMSKS' region motif is present at residues K625 to S629. An ATP-binding site is contributed by K628.

The protein belongs to the class-I aminoacyl-tRNA synthetase family. IleS type 2 subfamily. Monomer. It depends on Zn(2+) as a cofactor.

It localises to the cytoplasm. It catalyses the reaction tRNA(Ile) + L-isoleucine + ATP = L-isoleucyl-tRNA(Ile) + AMP + diphosphate. Functionally, catalyzes the attachment of isoleucine to tRNA(Ile). As IleRS can inadvertently accommodate and process structurally similar amino acids such as valine, to avoid such errors it has two additional distinct tRNA(Ile)-dependent editing activities. One activity is designated as 'pretransfer' editing and involves the hydrolysis of activated Val-AMP. The other activity is designated 'posttransfer' editing and involves deacylation of mischarged Val-tRNA(Ile). This is Isoleucine--tRNA ligase from Thermococcus kodakarensis (strain ATCC BAA-918 / JCM 12380 / KOD1) (Pyrococcus kodakaraensis (strain KOD1)).